The primary structure comprises 507 residues: F-box only protein 31 (507 aa).

Residues 19–42 (RQQRRGPAETAAADSEADTDPEEE) are disordered. A Phosphoserine modification is found at serine 33. Residues 33 to 42 (SEADTDPEEE) show a composition bias toward acidic residues. Threonine 37 is modified (phosphothreonine). Positions 50–55 (RCSLLE) match the D box motif. Residues 50-96 (RCSLLELPPELLVEIFASLPGTDLPSLAQVCSRFRRILHTDTIWRRR) form the F-box domain. Cysteine 192, histidine 200, cysteine 216, and histidine 222 together coordinate Zn(2+). Serine 264 is subject to Phosphoserine; by ATM. The DDL motif motif lies at 283–285 (DDL). The tract at residues 366–417 (EQEAGEGAAPPREPSAKAADGPPAKDGKEPGGGAEAAEQSASSGQGQPFVLP) is disordered. Low complexity predominate over residues 400–412 (EAAEQSASSGQGQ). The residue at position 448 (serine 448) is a Phosphoserine.

Belongs to the FBXO31 family. In terms of assembly, part of a SCF (SKP1-cullin-F-box) protein ligase complex SCF(FBXO31) composed of CUL1, SKP1, RBX1 and FBXO31. Interacts (when phosphorylated at Ser-33) with CDC20, promoting ubiquitination by the APC/C complex. Post-translationally, phosphorylation at Ser-264 by ATM following gamma-irradiation results in its stabilization. Phosphorylation at Ser-448 in absence of stress promotes its ubiquitination and degradation by the SCF(FBXO46) complex. Phosphorylation at Ser-33 by AKT1 promotes association with CDC20 and ubiquitination by the APC/C complex. Ubiquitinated by the SCF(FBXO46) complex in absence of stress, promoting its degradation. Ubiquitinated by the APC/C complex following phosphorylation at Ser-33, leading to its degradation by the proteasome.

Its subcellular location is the cytoplasm. It localises to the cytoskeleton. The protein localises to the microtubule organizing center. It is found in the centrosome. It participates in protein modification; protein ubiquitination. Functionally, substrate-recognition component of the SCF(FBXO31) protein ligase complex, which specifically mediates the ubiquitination of proteins amidated at their C-terminus in response to oxidative stress, leading to their degradation by the proteasome. FBXO31 specifically recognizes and binds C-terminal peptides bearing an amide: C-terminal amidation in response to oxidative stress takes place following protein fragmentation. The SCF(FBXO31) also plays a role in G1 arrest following DNA damage by mediating ubiquitination of phosphorylated cyclin-D1 (CCND1), promoting its degradation by the proteasome, resulting in G1 arrest. The SCF(FBXO31) complex is however not a major regulator of CCND1 stability during the G1/S transition. In response to genotoxic stress, the SCF(FBXO31) complex directs ubiquitination and degradation of phosphorylated MDM2, thereby promoting p53/TP53-mediated DNA damage response. SCF(FBXO31) complex is required for genomic integrity by catalyzing ubiquitination and degradation of cyclin-A (CCNA1 and/or CCNA2) during the G1 phase. In response to genotoxic stress, the SCF(FBXO31) complex directs ubiquitination and degradation of phosphorylated FBXO46 and MAP2K6. SCF(FBXO31) complex promotes ubiquitination and degradation of CDT1 during the G2 phase to prevent re-replication. The SCF(FBXO31) complex also mediates ubiquitination and degradation of DUSP6, OGT and PARD6A. The chain is F-box only protein 31 from Mus musculus (Mouse).